Here is a 90-residue protein sequence, read N- to C-terminus: MNKSELIDAIAASADLPKAAAGRALDAVIESVTGALKAGDSVVLVGFGTFSVTDRPARIGRNPQTGKTLEIAAAKKPGFKAGKALKEAVN.

The protein belongs to the bacterial histone-like protein family. As to quaternary structure, heterodimer of an alpha and a beta chain.

Histone-like DNA-binding protein which is capable of wrapping DNA to stabilize it, and thus to prevent its denaturation under extreme environmental conditions. The sequence is that of DNA-binding protein HU-beta (hupB) from Pseudomonas fluorescens (strain ATCC BAA-477 / NRRL B-23932 / Pf-5).